Consider the following 201-residue polypeptide: Ribosome maturation factor RimP (201 aa).

The protein belongs to the RimP family.

Its subcellular location is the cytoplasm. Required for maturation of 30S ribosomal subunits. This chain is Ribosome maturation factor RimP, found in Rhizobium leguminosarum bv. trifolii (strain WSM2304).